The chain runs to 223 residues: MQQSPQMIPMVLPSFPPTNNITTEQIQKYLDENKKLIMAILENQNLGKLAECAQYQALLQKNLMYLAAIADAQPQPPAATLTSGAMTPQAMAPNPSSMQPPPSYFMQQHQAVGMAQQIPPGIFPPRGPLQFGSPHQFLDPQQQLHQQAMQGHMGIRPMGLNNNNGLQHQMHHHETALAANNAGPNDASGGGKPDGTNMSQSGADGQGGSAARHGGGDAKTEGK.

The disordered stretch occupies residues Ala179–Lys223. The segment covering Gly214–Lys223 has biased composition (basic and acidic residues).

This sequence belongs to the SS18 family. Interacts with GRF1. As to expression, predominantly expressed in shoot tips containing the shoot apical meristem (SAM) and flower buds. Also expressed in mature flowers.

Transcription coactivator that plays a role in the regulation of cell expansion in leaf and cotyledons tissues. Component of a network formed by miR396, the GRFs and their interacting factors (GIFs) acting in the regulation of meristem function, at least partially through the control of cell proliferation. GIFs are involved in the positive regulation of cell proliferation of lateral organs in a functionally redundant manner. The sequence is that of GRF1-interacting factor 3 (GIF3) from Arabidopsis thaliana (Mouse-ear cress).